Reading from the N-terminus, the 89-residue chain is NAD(P)H-quinone oxidoreductase subunit L (89 aa).

Transmembrane regions (helical) follow at residues 29-46 (VLGG…FYWM) and 59-79 (LFIY…APFL).

This sequence belongs to the complex I NdhL subunit family. NDH-1 can be composed of about 15 different subunits; different subcomplexes with different compositions have been identified which probably have different functions.

The protein localises to the cellular thylakoid membrane. The catalysed reaction is a plastoquinone + NADH + (n+1) H(+)(in) = a plastoquinol + NAD(+) + n H(+)(out). The enzyme catalyses a plastoquinone + NADPH + (n+1) H(+)(in) = a plastoquinol + NADP(+) + n H(+)(out). NDH-1 shuttles electrons from an unknown electron donor, via FMN and iron-sulfur (Fe-S) centers, to quinones in the respiratory and/or the photosynthetic chain. The immediate electron acceptor for the enzyme in this species is believed to be plastoquinone. Couples the redox reaction to proton translocation, and thus conserves the redox energy in a proton gradient. Cyanobacterial NDH-1 also plays a role in inorganic carbon-concentration. This Prochlorococcus marinus (strain NATL1A) protein is NAD(P)H-quinone oxidoreductase subunit L.